We begin with the raw amino-acid sequence, 150 residues long: Large ribosomal subunit protein bL9 (150 aa).

It belongs to the bacterial ribosomal protein bL9 family.

Its function is as follows. Binds to the 23S rRNA. The sequence is that of Large ribosomal subunit protein bL9 from Polaromonas sp. (strain JS666 / ATCC BAA-500).